We begin with the raw amino-acid sequence, 846 residues long: Structure-specific endonuclease subunit SLX4 (846 aa).

Disordered regions lie at residues 1 to 20 (MTDH…VGSA), 84 to 111 (KAGA…AESM), 123 to 164 (QPAE…VKKA), 283 to 322 (RTSK…SKIT), 480 to 513 (DPTP…SSLL), 624 to 690 (PPNA…MGSQ), and 723 to 751 (TLAS…QTRA). Residues 141–153 (KPSEKGQKSEKTA) show a composition bias toward basic and acidic residues. The segment covering 293–303 (LDTGTSSTSEG) has biased composition (polar residues). The segment covering 306–318 (KRKQTKKAKRSAK) has biased composition (basic residues). 2 stretches are compositionally biased toward polar residues: residues 657–680 (KEIT…SKPT) and 725–751 (ASRS…QTRA).

Belongs to the SLX4 family. In terms of assembly, forms a heterodimer with SLX1. In terms of processing, phosphorylated in response to DNA damage.

The protein localises to the nucleus. Its function is as follows. Regulatory subunit of the SLX1-SLX4 structure-specific endonuclease that resolves DNA secondary structures generated during DNA repair and recombination. Has endonuclease activity towards branched DNA substrates, introducing single-strand cuts in duplex DNA close to junctions with ss-DNA. The sequence is that of Structure-specific endonuclease subunit SLX4 from Arthroderma otae (strain ATCC MYA-4605 / CBS 113480) (Microsporum canis).